We begin with the raw amino-acid sequence, 54 residues long: Conotoxin mr5.4b (54 aa).

The signal sequence occupies residues 1–14 (ILLLLIASAPSVDA). Residues 15–40 (QLKTKDDVPLASFHANVKRTLQKLLN) constitute a propeptide that is removed on maturation. Glu-52 bears the 4-carboxyglutamate mark.

This sequence belongs to the conotoxin T superfamily. Contains 2 disulfide bonds that can be either 'C1-C3, C2-C4' or 'C1-C4, C2-C3', since these disulfide connectivities have been observed for conotoxins with cysteine framework V (for examples, see AC P0DQQ7 and AC P81755). In terms of tissue distribution, expressed by the venom duct.

Its subcellular location is the secreted. This Conus marmoreus (Marble cone) protein is Conotoxin mr5.4b.